Consider the following 814-residue polypeptide: Microbial collagenase (814 aa).

Positions 1–21 (MELKILSVAIATTLTSTGVFA) are cleaved as a signal peptide. Positions 22-75 (LSEPVSQVTEQHAHSAHTHGVEFNRVEYQPTATLPIQPSKATRVQSLESLDESS) are excised as a propeptide. His-477 is a Zn(2+) binding site. The active site involves Glu-478. Residue His-481 coordinates Zn(2+). The PKD domain maps to 609-697 (APNAVITANS…VVISALGGND (89 aa)).

The protein belongs to the peptidase M9A family. Zn(2+) is required as a cofactor. Post-translationally, proteolytic cleavage might yield three different active forms.

It localises to the secreted. It carries out the reaction Digestion of native collagen in the triple helical region at Xaa-|-Gly bonds. With synthetic peptides, a preference is shown for Gly at P3 and P1', Pro and Ala at P2 and P2', and hydroxyproline, Ala or Arg at P3'.. The sequence is that of Microbial collagenase from Vibrio alginolyticus.